The following is a 528-amino-acid chain: Xylose import ATP-binding protein XylG (528 aa).

2 consecutive ABC transporter domains span residues 6 to 245 (LQMN…VGRE) and 262 to 507 (FEAR…LSHP). 38-45 (GENGAGKS) provides a ligand contact to ATP. Residues 504–528 (LSHPGDPDSNDPANNNHNDNDRKTT) form a disordered region.

This sequence belongs to the ABC transporter superfamily. Xylose importer (TC 3.A.1.2.4) family. In terms of assembly, the complex is composed of two ATP-binding proteins (XylG), two transmembrane proteins (XylH) and a solute-binding protein (XylF).

It localises to the cell inner membrane. It catalyses the reaction D-xylose(out) + ATP + H2O = D-xylose(in) + ADP + phosphate + H(+). Functionally, part of the ABC transporter complex XylFGH involved in xylose import. Responsible for energy coupling to the transport system. The protein is Xylose import ATP-binding protein XylG of Pseudomonas syringae pv. tomato (strain ATCC BAA-871 / DC3000).